The sequence spans 198 residues: Thymidine kinase (198 aa).

ATP is bound by residues 15-22 (GCMFSGKT) and 87-90 (DEAQ). Glu-88 functions as the Proton acceptor in the catalytic mechanism. Positions 144, 147, 182, and 185 each coordinate Zn(2+).

This sequence belongs to the thymidine kinase family. As to quaternary structure, homotetramer.

It is found in the cytoplasm. It carries out the reaction thymidine + ATP = dTMP + ADP + H(+). The chain is Thymidine kinase from Coprothermobacter proteolyticus (strain ATCC 35245 / DSM 5265 / OCM 4 / BT).